Reading from the N-terminus, the 284-residue chain is Small ribosomal subunit protein uS5 (284 aa).

Basic and acidic residues predominate over residues 1–10 (MMADEKKTPE). The tract at residues 1–105 (MMADEKKTPE…DNRRGGRREE (105 aa)) is disordered. Positions 14–23 (ETATPAVAVE) are enriched in low complexity. Positions 24-43 (DALKAEPTETLEAQKAKAEA) are enriched in basic and acidic residues. Over residues 44–67 (ETPAVAETPSEAAANQSAAQGAEG) the composition is skewed to low complexity. Over residues 68 to 105 (QPRERGGHDRGGRGGRGGNDRGRGRGGRDNRRGGRREE) the composition is skewed to basic and acidic residues. Residues 110 to 173 (IIEKLVHINR…AAARKKMIRV (64 aa)) enclose the S5 DRBM domain. Residues 246-284 (DQTSPKSVAQRRGKKVADLLGRGGASEAEAEADAAAIAE) are disordered.

Belongs to the universal ribosomal protein uS5 family. Part of the 30S ribosomal subunit. Contacts proteins S4 and S8.

With S4 and S12 plays an important role in translational accuracy. In terms of biological role, located at the back of the 30S subunit body where it stabilizes the conformation of the head with respect to the body. The sequence is that of Small ribosomal subunit protein uS5 from Erythrobacter litoralis (strain HTCC2594).